Reading from the N-terminus, the 222-residue chain is Tegument protein UL26 (222 aa).

The protein belongs to the herpesviridae US22 family. In terms of assembly, interacts with UL25. Interacts with ISGylation machinery components ISG15, UBA7 and HERC5; these interactions inhibit global protein ISGylation. ISGylated; ISGylation regulates UL26 stability and inhibits its activities to suppress NF-kappa-B signaling.

Its subcellular location is the virion tegument. The protein localises to the host nucleus. In terms of biological role, plays a role in the inhibition of host NF-kappa-B. This inhibition affects both the canonical and the non-canonical pathways. Blocks the induction of host IKK phosphorylation. May also influence the normal phosphorylation state of several tegument proteins including pp28 in virions. Also suppresses virus-induced ISGylation independent of its own ISGylation. This is Tegument protein UL26 (UL26) from Homo sapiens (Human).